Here is a 1130-residue protein sequence, read N- to C-terminus: Tyrosine-protein kinase ABL1 (1130 aa).

Residues 1-60 (MLEICLKLVGCKSKKGLSSSSSCYLEEALQRPVASDFEPQGLSEAARWNSKENLLAGPSE) are CAP. Leu-2 carries N-myristoyl glycine lipidation. Ser-50 bears the Phosphoserine mark. Residues 61 to 121 (NDPNLFVALY…PSNYITPVNS (61 aa)) form the SH3 domain. Tyr-70 is modified (phosphotyrosine; by autocatalysis). 6 positions are modified to phosphotyrosine: Tyr-115, Tyr-128, Tyr-139, Tyr-172, Tyr-185, and Tyr-215. Residues 127-217 (WYHGPVSRNA…GLITTLHYPA (91 aa)) form the SH2 domain. Position 226 is a phosphotyrosine; by autocatalysis (Tyr-226). Ser-229 is modified (phosphoserine). One can recognise a Protein kinase domain in the interval 242–493 (ITMKHKLGGG…PSFAEIHQAF (252 aa)). Residue 248-256 (LGGGQYGEV) coordinates ATP. 2 positions are modified to phosphotyrosine: Tyr-253 and Tyr-257. ATP is bound by residues Lys-271 and 316 to 322 (EFMTYGN). Asp-363 functions as the Proton acceptor in the catalytic mechanism. The short motif at 381-405 (DFGLSRLMTGDTYTAHAGAKFPIKW) is the Kinase activation loop element. Tyr-393 carries the phosphotyrosine; by autocatalysis and SRC-type Tyr-kinases modification. Residue Tyr-413 is modified to Phosphotyrosine. Phosphoserine occurs at positions 446, 559, and 569. A disordered region spans residues 518 to 996 (AVSTLLQAPE…SASSALAGDQ (479 aa)). Residues 537-566 (RAAEHRDTTDVPEMPHSKGQGESDPLDHEP) are compositionally biased toward basic and acidic residues. Basic and acidic residues predominate over residues 586–597 (EDERLLPKDKKT). Positions 605–609 (KKKKK) match the Nuclear localization signal 1 motif. Phosphoserine; by PAK2 is present on residues Ser-618 and Ser-619. Phosphoserine occurs at positions 620, 659, and 683. The span at 620–640 (SFREMDGQPERRGAGEEEGRD) shows a compositional bias: basic and acidic residues. Over residues 689–698 (KSSTLTSSRL) the composition is skewed to polar residues. A Nuclear localization signal 2 motif is present at residues 709-715 (SSKRFLR). Lys-711 is modified (N6-acetyllysine; by EP300). Phosphoserine is present on Ser-718. 2 positions are modified to phosphothreonine: Thr-735 and Thr-751. Over residues 740–752 (LQSTGRQFDSSTF) the composition is skewed to polar residues. The span at 755–774 (HKSEKPALPRKRAGENRSDQ) shows a compositional bias: basic and acidic residues. The Nuclear localization signal 3 signature appears at 762–769 (LPRKRAGE). Thr-781 bears the Phosphothreonine mark. Residues 788-802 (KKNEEAADEVFKDIM) are compositionally biased toward basic and acidic residues. Phosphothreonine occurs at positions 814, 823, 844, and 852. The residue at position 855 (Ser-855) is a Phosphoserine. Positions 869 to 968 (PAEESRVRRH…VLPATPKPQS (100 aa)) are DNA-binding. The segment covering 881–891 (SSESPGRDKGK) has biased composition (basic and acidic residues). The span at 905–915 (ASAGKAGGKPS) shows a compositional bias: low complexity. Ser-917 carries the phosphoserine modification. The segment at 953–1130 (EGLKKPVLPA…VKEISDIVQR (178 aa)) is F-actin-binding. Over residues 965–975 (KPQSAKPSGTP) the composition is skewed to polar residues. Position 977 is a phosphoserine (Ser-977). Residues 984 to 993 (TLPSASSALA) are compositionally biased toward low complexity. The Nuclear export signal signature appears at 1090 to 1100 (LENNLRELQIC).

It belongs to the protein kinase superfamily. Tyr protein kinase family. ABL subfamily. As to quaternary structure, interacts with SORBS1 following insulin stimulation. Found in a trimolecular complex containing CDK5 and CABLES1. Interacts with CABLES1 and PSTPIP1. Interacts with ZDHHC16, ITGB1 and HCK. Interacts with STX17; probably phosphorylates STX17. Interacts with INPPL1/SHIP2. Interacts with the 14-3-3 proteins, YWHAB, YWHAE, YWHAG, YWHAH, SFN and YWHAZ; the interaction with 14-3-3 proteins requires phosphorylation on Thr-735 and, sequesters ABL1 into the cytoplasm. Interacts with ABI1, ABI2, BCR, CRK, FGR, FYN, HCK, LYN, PSMA7 RAD9A, RAD51, RAD52, TP73 and WASF3. A complex made of ABL1, CTTN and MYLK regulates cortical actin-based cytoskeletal rearrangement critical to sphingosine 1-phosphate (S1P)-mediated endothelial cell (EC) barrier enhancement. Interacts (via SH3 domain) with CASP9; the interaction is direct and increases in the response of cells to genotoxic stress and ABL1/c-Abl activation. Found in a complex with ABL1, ABL2, CRK and UNC119; leading to the inhibition of CRK phosphorylation by ABL kinases. Interacts with TBX21. Interacts with NEDD9/HEF1; interaction is induced by CXCL12 promotion of ABL-mediated phosphorylation of NEDD9/HEF1. The cofactor is Mg(2+). In terms of processing, acetylated at Lys-711 by EP300 which promotes the cytoplasmic translocation. Post-translationally, phosphorylation at Tyr-70 by members of the SRC family of kinases disrupts SH3 domain-based autoinhibitory interactions and intermolecular associations, such as that with ABI1, and also enhances kinase activity. Phosphorylation at Tyr-226 and Tyr-393 correlate with increased activity. DNA damage-induced activation of ABL1 requires the function of ATM and Ser-446 phosphorylation. Phosphorylation at Ser-569 has been attributed to a CDC2-associated kinase and is coupled to cell division. Phosphorylation at Ser-618 and Ser-619 by PAK2 increases binding to CRK and reduces binding to ABI1. Phosphorylation on Thr-735 is required for binding 14-3-3 proteins for cytoplasmic translocation. Phosphorylated by PRKDC. Polyubiquitinated. Polyubiquitination of ABL1 leads to degradation. In terms of tissue distribution, widely expressed.

The protein resides in the cytoplasm. It is found in the cytoskeleton. Its subcellular location is the nucleus. It localises to the mitochondrion. The protein localises to the nucleus membrane. It catalyses the reaction L-tyrosyl-[protein] + ATP = O-phospho-L-tyrosyl-[protein] + ADP + H(+). Stabilized in the inactive form by an association between the SH3 domain and the SH2-TK linker region, interactions of the N-terminal cap, and contributions from an N-terminal myristoyl group and phospholipids. Activated by autophosphorylation as well as by SRC-family kinase-mediated phosphorylation. Activated by RIN1 binding to the SH2 and SH3 domains. Also stimulated by cell death inducers and DNA-damage. Phosphatidylinositol 4,5-bisphosphate (PIP2), a highly abundant phosphoinositide known to regulate cytoskeletal and membrane proteins, also inhibits the tyrosine kinase activity. Activated by 5-(1,3-diaryl-1H-pyrazol-4-yl)hydantoin, 5-[3-(4-fluorophenyl)-1-phenyl-1H-pyrazol-4-yl]-2,4-imidazolidinedione (DPH). Inhibited by ABI1, whose activity is controlled by ABL1 itself through tyrosine phosphorylation. Also inhibited by imatinib mesylate (Gleevec) which is used for the treatment of chronic myeloid leukemia (CML), and by VX-680, an inhibitor that also acts on imatinib-resistant mutants. Non-receptor tyrosine-protein kinase that plays a role in many key processes linked to cell growth and survival such as cytoskeleton remodeling in response to extracellular stimuli, cell motility and adhesion, receptor endocytosis, autophagy, DNA damage response and apoptosis. Coordinates actin remodeling through tyrosine phosphorylation of proteins controlling cytoskeleton dynamics like WASF3 (involved in branch formation); ANXA1 (involved in membrane anchoring); DBN1, DBNL, CTTN, RAPH1 and ENAH (involved in signaling); or MAPT and PXN (microtubule-binding proteins). Phosphorylation of WASF3 is critical for the stimulation of lamellipodia formation and cell migration. Involved in the regulation of cell adhesion and motility through phosphorylation of key regulators of these processes such as BCAR1, CRK, CRKL, DOK1, EFS or NEDD9. Phosphorylates multiple receptor tyrosine kinases and more particularly promotes endocytosis of EGFR, facilitates the formation of neuromuscular synapses through MUSK, inhibits PDGFRB-mediated chemotaxis and modulates the endocytosis of activated B-cell receptor complexes. Other substrates which are involved in endocytosis regulation are the caveolin (CAV1) and RIN1. Moreover, ABL1 regulates the CBL family of ubiquitin ligases that drive receptor down-regulation and actin remodeling. Phosphorylation of CBL leads to increased EGFR stability. Involved in late-stage autophagy by regulating positively the trafficking and function of lysosomal components. ABL1 targets to mitochondria in response to oxidative stress and thereby mediates mitochondrial dysfunction and cell death. In response to oxidative stress, phosphorylates serine/threonine kinase PRKD2 at 'Tyr-717'. ABL1 is also translocated in the nucleus where it has DNA-binding activity and is involved in DNA-damage response and apoptosis. Many substrates are known mediators of DNA repair: DDB1, DDB2, ERCC3, ERCC6, RAD9A, RAD51, RAD52 or WRN. Activates the proapoptotic pathway when the DNA damage is too severe to be repaired. Phosphorylates TP73, a primary regulator for this type of damage-induced apoptosis. Phosphorylates the caspase CASP9 on 'Tyr-153' and regulates its processing in the apoptotic response to DNA damage. Phosphorylates PSMA7 that leads to an inhibition of proteasomal activity and cell cycle transition blocks. ABL1 also acts as a regulator of multiple pathological signaling cascades during infection. Several known tyrosine-phosphorylated microbial proteins have been identified as ABL1 substrates. This is the case of A36R of Vaccinia virus, Tir (translocated intimin receptor) of pathogenic E.coli and possibly Citrobacter, CagA (cytotoxin-associated gene A) of H.pylori, or AnkA (ankyrin repeat-containing protein A) of A.phagocytophilum. Pathogens can highjack ABL1 kinase signaling to reorganize the host actin cytoskeleton for multiple purposes, like facilitating intracellular movement and host cell exit. Finally, functions as its own regulator through autocatalytic activity as well as through phosphorylation of its inhibitor, ABI1. Regulates T-cell differentiation in a TBX21-dependent manner. Positively regulates chemokine-mediated T-cell migration, polarization, and homing to lymph nodes and immune-challenged tissues, potentially via activation of NEDD9/HEF1 and RAP1. Phosphorylates TBX21 on tyrosine residues leading to an enhancement of its transcriptional activator activity. This is Tyrosine-protein kinase ABL1 (ABL1) from Homo sapiens (Human).